The chain runs to 1692 residues: Flagellar attachment zone protein 1 (1692 aa).

Coiled-coil stretches lie at residues 613–657 (REQE…KLQK), 684–864 (VTLD…HKVR), and 903–1607 (NDHM…SALE). Tandem repeats lie at residues 1012–1025 (EELELKAAENEKLA), 1026–1039 (EELELKAAENEKLA), 1040–1053 (EELELKVAENEKLA), 1054–1067 (EELELKVAENEKLA), 1068–1081 (EELELKAAENEKLA), 1082–1095 (EELELKAAENEKLA), 1096–1109 (EELELKAAENEKLA), 1110–1123 (EELELKAAENEKLA), 1124–1137 (EELELKAAENEKLA), 1138–1151 (EELELKAAENEKLA), 1152–1165 (EELELKAAENEKLA), 1166–1179 (EELELKVAENEKLA), 1180–1193 (EELELKAAENEKLA), 1194–1207 (EELELKVAENEKLA), 1208–1221 (EELELKAAENEKLA), 1222–1235 (EELELKAAENEKLA), 1236–1249 (EELELKAAENEKLA), 1250–1263 (EELELKAAENEKLA), 1264–1277 (EELELKVAENEKLA), 1278–1291 (EELELKAAENEKLA), 1292–1305 (EELELKVAENEKLA), 1306–1319 (EELELKAAENEKLA), 1320–1333 (EELELKVAENEKLA), 1334–1347 (EELELKAAENEKLA), 1348–1361 (EELELKVAENEKLA), 1362–1375 (EELELKAAENEKLA), 1376–1389 (EELELKAAENEKLA), 1390–1403 (EELELKAAENEKLA), 1404–1417 (EELELKAAENEKLA), 1418–1431 (EELELKAAENEKLA), 1432–1445 (EELELKVAENEKLA), 1446–1459 (EELELKAAENEKLA), 1460–1473 (EELELKVAENEKLA), 1474–1487 (EELELKAAENEKLA), 1488–1501 (EELELKAAENEKLA), 1502–1515 (EELELKAAENEKLA), and 1516–1529 (EELELKVAENKRLA). The interval 1012–1529 (EELELKAAEN…LKVAENKRLA (518 aa)) is 37 X 14 AA tandem repeats of E-E-L-E-L-K-[VA]-A-E-N-E-K-L-A.

Its subcellular location is the cell projection. The protein localises to the cilium. The protein resides in the flagellum. Its function is as follows. A component of FAZ filament that is required for correct FAZ assembly and attachment. Not essential for new flagellum growth. The sequence is that of Flagellar attachment zone protein 1 from Trypanosoma brucei brucei (strain 927/4 GUTat10.1).